We begin with the raw amino-acid sequence, 322 residues long: DNA repair and recombination protein RadA (322 aa).

105–112 contributes to the ATP binding site; sequence GMFGSGKT.

This sequence belongs to the eukaryotic RecA-like protein family.

Its function is as follows. Involved in DNA repair and in homologous recombination. Binds and assemble on single-stranded DNA to form a nucleoprotein filament. Hydrolyzes ATP in a ssDNA-dependent manner and promotes DNA strand exchange between homologous DNA molecules. The polypeptide is DNA repair and recombination protein RadA (Methanococcus maripaludis (strain DSM 14266 / JCM 13030 / NBRC 101832 / S2 / LL)).